The sequence spans 82 residues: Delta-ctenitoxin-Pn2c (82 aa).

A signal peptide spans 1 to 17 (MKVAILFLSILVLAVAS). The propeptide occupies 18–34 (ESIEESRDDFAVEELGR). Cystine bridges form between cysteine 37–cysteine 51, cysteine 44–cysteine 57, cysteine 48–cysteine 80, cysteine 50–cysteine 65, and cysteine 59–cysteine 63.

As to expression, expressed by the venom gland.

It localises to the secreted. Its function is as follows. Reversible inhibitor of voltage-gated sodium channels (Nav). Delays the fast inactivation kinetics of neuronal-type sodium channels. In vivo, it induces rat penile erection. This effect may be due to the neuronal nitric oxide synthase (NOS1), since one of its selective inhibitor completely abolishes all the toxic effects of the toxin. This toxin also causes scratching, lacrimation, hypersalivation, sweating and agitation followed by spastic paralysis of the anterior and posterior extremities and death at dose levels of 0.24 mg/mouse. It is also insecticidal to the larval and adult forms of the house fly. This is Delta-ctenitoxin-Pn2c from Phoneutria nigriventer (Brazilian armed spider).